The chain runs to 372 residues: UDP-N-acetylglucosamine--N-acetylmuramyl-(pentapeptide) pyrophosphoryl-undecaprenol N-acetylglucosamine transferase (372 aa).

Residues 16–18 (TGG), N128, R164, S192, I250, and Q295 each bind UDP-N-acetyl-alpha-D-glucosamine.

This sequence belongs to the glycosyltransferase 28 family. MurG subfamily.

Its subcellular location is the cell inner membrane. It catalyses the reaction di-trans,octa-cis-undecaprenyl diphospho-N-acetyl-alpha-D-muramoyl-L-alanyl-D-glutamyl-meso-2,6-diaminopimeloyl-D-alanyl-D-alanine + UDP-N-acetyl-alpha-D-glucosamine = di-trans,octa-cis-undecaprenyl diphospho-[N-acetyl-alpha-D-glucosaminyl-(1-&gt;4)]-N-acetyl-alpha-D-muramoyl-L-alanyl-D-glutamyl-meso-2,6-diaminopimeloyl-D-alanyl-D-alanine + UDP + H(+). It participates in cell wall biogenesis; peptidoglycan biosynthesis. Functionally, cell wall formation. Catalyzes the transfer of a GlcNAc subunit on undecaprenyl-pyrophosphoryl-MurNAc-pentapeptide (lipid intermediate I) to form undecaprenyl-pyrophosphoryl-MurNAc-(pentapeptide)GlcNAc (lipid intermediate II). The polypeptide is UDP-N-acetylglucosamine--N-acetylmuramyl-(pentapeptide) pyrophosphoryl-undecaprenol N-acetylglucosamine transferase (Paraburkholderia phytofirmans (strain DSM 17436 / LMG 22146 / PsJN) (Burkholderia phytofirmans)).